Consider the following 47-residue polypeptide: Large ribosomal subunit protein eL40 (47 aa).

The protein belongs to the eukaryotic ribosomal protein eL40 family.

This Methanococcus vannielii (strain ATCC 35089 / DSM 1224 / JCM 13029 / OCM 148 / SB) protein is Large ribosomal subunit protein eL40.